The primary structure comprises 421 residues: UDP-N-acetylglucosamine 1-carboxyvinyltransferase (421 aa).

22–23 (KN) contributes to the phosphoenolpyruvate binding site. Arg-93 lines the UDP-N-acetyl-alpha-D-glucosamine pocket. The Proton donor role is filled by Cys-117. Cys-117 carries the 2-(S-cysteinyl)pyruvic acid O-phosphothioketal modification. UDP-N-acetyl-alpha-D-glucosamine contacts are provided by residues 122–126 (RPVDL), Asp-308, and Ile-330.

It belongs to the EPSP synthase family. MurA subfamily.

The protein localises to the cytoplasm. The catalysed reaction is phosphoenolpyruvate + UDP-N-acetyl-alpha-D-glucosamine = UDP-N-acetyl-3-O-(1-carboxyvinyl)-alpha-D-glucosamine + phosphate. It functions in the pathway cell wall biogenesis; peptidoglycan biosynthesis. In terms of biological role, cell wall formation. Adds enolpyruvyl to UDP-N-acetylglucosamine. This is UDP-N-acetylglucosamine 1-carboxyvinyltransferase from Pseudomonas savastanoi pv. phaseolicola (strain 1448A / Race 6) (Pseudomonas syringae pv. phaseolicola (strain 1448A / Race 6)).